Consider the following 307-residue polypeptide: D-alanine--D-alanine ligase (307 aa).

The ATP-grasp domain occupies 101-301; that stretch reads KTVMRAAGVS…FGELVRWMVE (201 aa). An ATP-binding site is contributed by 127–182; it reads PLTPPYVVKPIAEGSSMGVIIVRDERSHPPQILASDEWVYGEEVLAETYVAGRELT. Mg(2+) contacts are provided by Asp251, Glu268, and Asn270.

This sequence belongs to the D-alanine--D-alanine ligase family. It depends on Mg(2+) as a cofactor. Requires Mn(2+) as cofactor.

Its subcellular location is the cytoplasm. The catalysed reaction is 2 D-alanine + ATP = D-alanyl-D-alanine + ADP + phosphate + H(+). It functions in the pathway cell wall biogenesis; peptidoglycan biosynthesis. Functionally, cell wall formation. The chain is D-alanine--D-alanine ligase from Methylorubrum extorquens (strain CM4 / NCIMB 13688) (Methylobacterium extorquens).